A 565-amino-acid chain; its full sequence is Cytokinin dehydrogenase 2 (565 aa).

An N-terminal signal peptide occupies residues 1 to 20 (MKQEQVRMAVLLMLNCFVKA). An N-linked (GlcNAc...) asparagine glycan is attached at asparagine 64. The FAD-binding PCMH-type domain maps to 74–255 (RLAAAAAVLY…TRARIPLAPA (182 aa)). FAD is bound by residues alanine 108, glycine 110, and glycine 112. Histidine 113 carries the post-translational modification Pros-8alpha-FAD histidine. Serine 114, glutamine 118, aspartate 179, threonine 184, serine 190, isoleucine 194, and isoleucine 245 together coordinate FAD. The N-linked (GlcNAc...) asparagine glycan is linked to asparagine 464. The FAD site is built by tyrosine 517, serine 554, and glutamine 557.

This sequence belongs to the oxygen-dependent FAD-linked oxidoreductase family. As to quaternary structure, monomer. Requires FAD as cofactor. Glycosylated. In terms of tissue distribution, mostly expressed in leaves, culms, inflorescence meristems, and flowers, especially in vascular tissues.

The protein resides in the secreted. It is found in the extracellular space. The enzyme catalyses N(6)-dimethylallyladenine + A + H2O = 3-methyl-2-butenal + adenine + AH2. In terms of biological role, catalyzes the oxidation of cytokinins, a family of N(6)-substituted adenine derivatives that are plant hormones, where the substituent is an isopentenyl group. Is a major QTL involved in grain yield. Modulates the number of reproductive organs by regulating the cytokinin accumulation in inflorescence meristems. Acts as negative regulator of panicle branching. In Oryza sativa subsp. japonica (Rice), this protein is Cytokinin dehydrogenase 2.